A 406-amino-acid chain; its full sequence is Accessory Sec system protein translocase subunit SecY2 (406 aa).

10 helical membrane-spanning segments follow: residues 14-34, 63-83, 108-128, 131-151, 156-176, 190-210, 246-266, 285-305, 344-364, and 368-388; these read SWTV…LPFI, FSLF…WQMF, FAIA…EVGI, GLAI…LVWL, SFFG…ANLP, LPII…AVIV, FMYA…IQIL, PIWL…FAFV, AVIG…IVLI, and YLQL…VYNV.

The protein belongs to the SecY/SEC61-alpha family. SecY2 subfamily. In terms of assembly, component of the accessory SecA2/SecY2 protein translocase complex required to export cell wall proteins. May form heterotrimers with SecE and SecG subunits.

It is found in the cell membrane. Its function is as follows. Part of the accessory SecA2/SecY2 system specifically required for export of possible cell wall proteins. The central subunit of a protein translocation channel. The sequence is that of Accessory Sec system protein translocase subunit SecY2 from Streptococcus salivarius (strain CCHSS3).